A 103-amino-acid polypeptide reads, in one-letter code: Integration host factor subunit alpha (103 aa).

The segment at Phe51–Ile73 is disordered.

Belongs to the bacterial histone-like protein family. As to quaternary structure, heterodimer of an alpha and a beta chain.

Functionally, this protein is one of the two subunits of integration host factor, a specific DNA-binding protein that functions in genetic recombination as well as in transcriptional and translational control. This is Integration host factor subunit alpha from Azoarcus sp. (strain BH72).